A 493-amino-acid polypeptide reads, in one-letter code: Serine/threonine-protein kinase PBL34 (493 aa).

2 disordered regions span residues 1 to 42 (MGLD…EEEE) and 84 to 117 (SKSA…TPVI). Gly2 carries N-myristoyl glycine lipidation. The segment covering 12–37 (WKSEKPKETENKNHKKKNGDDNKSRN) has biased composition (basic and acidic residues). The span at 100 to 114 (SSTTTTSNAESSSST) shows a compositional bias: low complexity. Thr131 is subject to Phosphothreonine. The region spanning 142–428 (FRPESLLGEG…VEALKPLPHL (287 aa)) is the Protein kinase domain. ATP is bound by residues 148–156 (LGEGGFGCV) and Lys180. The residue at position 225 (Tyr225) is a Phosphotyrosine. Catalysis depends on Asp275, which acts as the Proton acceptor. Ser279 carries the phosphoserine modification. Thr306 is modified (phosphothreonine). At Ser309 the chain carries Phosphoserine. Phosphothreonine occurs at positions 310 and 315. Residue Tyr323 is modified to Phosphotyrosine. The interval 447-493 (KNGSGRSQGFGSRNGQHQPVFRTLSSPHGSSPYRHQIPSPKPKGATT) is disordered. The segment covering 450-475 (SGRSQGFGSRNGQHQPVFRTLSSPHG) has biased composition (polar residues).

Belongs to the protein kinase superfamily. Ser/Thr protein kinase family. As to quaternary structure, interacts with the Xanthomonas campestris effector XopAC/AvrAC. Interacts with SD129. Phosphorylated by SD129 at Thr-306 and Thr-310 in response to the pathogen-associated molecular pattern (PAMP) 3-OH-C10:0, a medium-chain 3-hydroxy fatty acid.

Its subcellular location is the cell membrane. It catalyses the reaction L-seryl-[protein] + ATP = O-phospho-L-seryl-[protein] + ADP + H(+). The enzyme catalyses L-threonyl-[protein] + ATP = O-phospho-L-threonyl-[protein] + ADP + H(+). Involved in chitin-triggered immune signaling and is required for reactive oxygen species (ROS) production. Acts downstream of SD129 in defense signaling triggered by the pathogen-associated molecular pattern (PAMP) 3-OH-C10:0, a medium-chain 3-hydroxy fatty acid. This is Serine/threonine-protein kinase PBL34 from Arabidopsis thaliana (Mouse-ear cress).